A 674-amino-acid chain; its full sequence is Zyxin (674 aa).

The disordered stretch occupies residues 35–447 (PPKPKVNPFR…PHQDQTSGSQ (413 aa)). Positions 86 to 109 (LPPPPPNEEPMSPPGSSFPPPPPS) are enriched in pro residues. Residues 110–120 (FGDDGPGSPLG) are compositionally biased toward low complexity. Pro residues-rich tracts occupy residues 121 to 148 (LFPP…PPPL), 162 to 180 (ASVP…PAPP), 187 to 209 (KPAP…PPQS), 222 to 240 (KPSP…PPVA), and 254 to 266 (AAPP…PPAP). 2 stretches are compositionally biased toward basic and acidic residues: residues 328–341 (AKHE…KHEA) and 358–387 (QRDK…RGER). LIM zinc-binding domains follow at residues 481–542 (ELCG…TLEC), 543–600 (CAVC…RRYA), and 601–671 (PRCT…RARA).

The protein belongs to the zyxin/ajuba family. As to quaternary structure, interacts (via LIM2 domain) with hesx1/anf1.

It is found in the cytoplasm. The protein localises to the cytoskeleton. Its subcellular location is the cell junction. It localises to the focal adhesion. In terms of biological role, adhesion plaque protein. May be a component of a signal transduction pathway that mediates adhesion-stimulated changes in gene expression. Suppresses the transcription-repressing activity of hesx1/anf1. The chain is Zyxin from Xenopus tropicalis (Western clawed frog).